We begin with the raw amino-acid sequence, 192 residues long: Crossover junction endodeoxyribonuclease RuvC (192 aa).

Residues Asp9, Glu70, and Asp143 contribute to the active site. Residues Asp9, Glu70, and Asp143 each contribute to the Mg(2+) site. Residues 161 to 192 (GASVATTGPGSSSLTPAQRAWAEAEAKARRAR) are disordered. Residues 163–176 (SVATTGPGSSSLTP) show a composition bias toward polar residues. Over residues 182–192 (AEAEAKARRAR) the composition is skewed to basic and acidic residues.

It belongs to the RuvC family. As to quaternary structure, homodimer which binds Holliday junction (HJ) DNA. The HJ becomes 2-fold symmetrical on binding to RuvC with unstacked arms; it has a different conformation from HJ DNA in complex with RuvA. In the full resolvosome a probable DNA-RuvA(4)-RuvB(12)-RuvC(2) complex forms which resolves the HJ. Mg(2+) is required as a cofactor.

It localises to the cytoplasm. It carries out the reaction Endonucleolytic cleavage at a junction such as a reciprocal single-stranded crossover between two homologous DNA duplexes (Holliday junction).. In terms of biological role, the RuvA-RuvB-RuvC complex processes Holliday junction (HJ) DNA during genetic recombination and DNA repair. Endonuclease that resolves HJ intermediates. Cleaves cruciform DNA by making single-stranded nicks across the HJ at symmetrical positions within the homologous arms, yielding a 5'-phosphate and a 3'-hydroxyl group; requires a central core of homology in the junction. The consensus cleavage sequence is 5'-(A/T)TT(C/G)-3'. Cleavage occurs on the 3'-side of the TT dinucleotide at the point of strand exchange. HJ branch migration catalyzed by RuvA-RuvB allows RuvC to scan DNA until it finds its consensus sequence, where it cleaves and resolves the cruciform DNA. This Pseudarthrobacter chlorophenolicus (strain ATCC 700700 / DSM 12829 / CIP 107037 / JCM 12360 / KCTC 9906 / NCIMB 13794 / A6) (Arthrobacter chlorophenolicus) protein is Crossover junction endodeoxyribonuclease RuvC.